A 413-amino-acid chain; its full sequence is Elongation factor 1-alpha (413 aa).

The region spanning 5 to 211 (KTHMNLAFIG…DALDEPDKPV (207 aa)) is the tr-type G domain. The interval 14 to 21 (GHVDHGKS) is G1. 14 to 21 (GHVDHGKS) contacts GTP. Ser21 is a binding site for Mg(2+). The interval 60 to 64 (GVTID) is G2. The interval 81 to 84 (DCPG) is G3. GTP-binding positions include 81–85 (DCPGH) and 136–139 (NKMD). Positions 136–139 (NKMD) are G4. Residues 175–177 (SAF) form a G5 region.

This sequence belongs to the TRAFAC class translation factor GTPase superfamily. Classic translation factor GTPase family. EF-Tu/EF-1A subfamily.

It is found in the cytoplasm. The enzyme catalyses GTP + H2O = GDP + phosphate + H(+). In terms of biological role, GTP hydrolase that promotes the GTP-dependent binding of aminoacyl-tRNA to the A-site of ribosomes during protein biosynthesis. The protein is Elongation factor 1-alpha of Methanosphaera stadtmanae (strain ATCC 43021 / DSM 3091 / JCM 11832 / MCB-3).